A 46-amino-acid chain; its full sequence is Mu-hexatoxin-Mg2a (46 aa).

5 cysteine pairs are disulfide-bonded: cysteine 3–cysteine 18, cysteine 10–cysteine 24, cysteine 17–cysteine 36, cysteine 21–cysteine 43, and cysteine 26–cysteine 34.

This sequence belongs to the neurotoxin 02 (plectoxin) family. 02 (plectoxin) subfamily. As to expression, expressed by the venom gland.

Its subcellular location is the secreted. Functionally, competes for binding at site 3 of the insect voltage-gated sodium channel (Nav). Insecticidal neurotoxin. Causes temporary paralysis to lepidopteran larvae (10.3 nmol/g) or to crickets (doses from 0.93 to 119 ug/g). Is not toxic to mice when injected intracranially (high doses). This Macrothele gigas (Japanese funnel web spider) protein is Mu-hexatoxin-Mg2a.